A 150-amino-acid chain; its full sequence is Ribonuclease K6 (150 aa).

The signal sequence occupies residues 1-23 (MVLCFPLLLLLLVLWGPVCLLHA). The active-site Proton acceptor is the His38. 4 cysteine pairs are disulfide-bonded: Cys46-Cys104, Cys60-Cys114, Cys78-Cys129, and Cys85-Cys92. A glycan (N-linked (GlcNAc...) asparagine) is linked at Asn55. Substrate-binding positions include 61-65 (KHQNT) and Lys86. The N-linked (GlcNAc...) asparagine glycan is linked to Asn100. Substrate is bound at residue Arg105. The active-site Proton donor is His145.

Belongs to the pancreatic ribonuclease family. In terms of assembly, interacts (via N-terminus) with bacterial lipopolysaccharide (LPS).

The protein localises to the secreted. It is found in the lysosome. The protein resides in the cytoplasmic granule. In terms of biological role, ribonuclease which shows a preference for the pyrimidines uridine and cytosine. Has potent antibacterial activity against a range of Gram-positive and Gram-negative bacteria, including P.aeruginosa, A.baumanii, M.luteus, S.aureus, E.faecalis, E.faecium, S.saprophyticus and E.coli. Causes loss of bacterial membrane integrity, and also promotes agglutination of Gram-negative bacteria. Probably contributes to urinary tract sterility. Bactericidal activity is independent of RNase activity. The protein is Ribonuclease K6 (RNASE6) of Papio hamadryas (Hamadryas baboon).